The chain runs to 454 residues: Probable ECA polymerase (454 aa).

Transmembrane regions (helical) follow at residues 3 to 23 (LGQF…ILTL), 39 to 59 (FSML…MLVF), 61 to 81 (FGVA…ATAF), 119 to 139 (LALV…FLLF), 154 to 174 (GVAL…VYFL), 180 to 200 (AWFF…VIVG), 201 to 221 (GTRA…IVRG), 222 to 242 (WITL…MFWL), 340 to 360 (LVVM…GLII), 377 to 397 (YKAA…IVLA), and 409 to 429 (VFFC…YWLF).

This sequence belongs to the WzyE family. As to quaternary structure, probably part of a complex composed of WzxE, WzyE and WzzE.

It localises to the cell inner membrane. It functions in the pathway bacterial outer membrane biogenesis; enterobacterial common antigen biosynthesis. Its function is as follows. Probably involved in the polymerization of enterobacterial common antigen (ECA) trisaccharide repeat units. The sequence is that of Probable ECA polymerase from Yersinia pseudotuberculosis serotype O:1b (strain IP 31758).